Here is a 175-residue protein sequence, read N- to C-terminus: Protein-export protein SecB (175 aa).

Polar residues predominate over residues 153 to 163; that stretch reads QQQPDAANGND. The tract at residues 153–175 is disordered; that stretch reads QQQPDAANGNDSGIILPPGATRQ.

The protein belongs to the SecB family. Homotetramer, a dimer of dimers. One homotetramer interacts with 1 SecA dimer.

Its subcellular location is the cytoplasm. One of the proteins required for the normal export of preproteins out of the cell cytoplasm. It is a molecular chaperone that binds to a subset of precursor proteins, maintaining them in a translocation-competent state. It also specifically binds to its receptor SecA. This chain is Protein-export protein SecB, found in Bordetella bronchiseptica (strain ATCC BAA-588 / NCTC 13252 / RB50) (Alcaligenes bronchisepticus).